The following is a 147-amino-acid chain: Phosphoribosyl-AMP cyclohydrolase (147 aa).

Aspartate 89 serves as a coordination point for Mg(2+). Cysteine 90 contributes to the Zn(2+) binding site. Positions 91 and 93 each coordinate Mg(2+). Cysteine 106 and cysteine 113 together coordinate Zn(2+).

This sequence belongs to the PRA-CH family. As to quaternary structure, homodimer. It depends on Mg(2+) as a cofactor. The cofactor is Zn(2+).

The protein localises to the cytoplasm. It carries out the reaction 1-(5-phospho-beta-D-ribosyl)-5'-AMP + H2O = 1-(5-phospho-beta-D-ribosyl)-5-[(5-phospho-beta-D-ribosylamino)methylideneamino]imidazole-4-carboxamide. It functions in the pathway amino-acid biosynthesis; L-histidine biosynthesis; L-histidine from 5-phospho-alpha-D-ribose 1-diphosphate: step 3/9. Catalyzes the hydrolysis of the adenine ring of phosphoribosyl-AMP. The protein is Phosphoribosyl-AMP cyclohydrolase of Nitrobacter hamburgensis (strain DSM 10229 / NCIMB 13809 / X14).